Reading from the N-terminus, the 281-residue chain is Tumor necrosis factor ligand superfamily member 10 (281 aa).

Over 1-17 (MAMMEVQGGPSLGQTCV) the chain is Cytoplasmic. Residues 18 to 38 (LIVIFTVLLQSLCVAVTYVYF) form a helical; Signal-anchor for type II membrane protein membrane-spanning segment. The Extracellular segment spans residues 39–281 (TNELKQMQDK…ASFFGAFLVG (243 aa)). The 159-residue stretch at 122-280 (VAAHITGTRG…EASFFGAFLV (159 aa)) folds into the THD domain. The tract at residues 124-144 (AHITGTRGRSNTLSSPNSKNE) is disordered. Polar residues predominate over residues 130 to 141 (RGRSNTLSSPNS). Position 230 (cysteine 230) interacts with Zn(2+).

The protein belongs to the tumor necrosis factor family. Homotrimer. One TNFSF10 homotrimer interacts with three TNFSF10A mononers. One TNFSF10 homotrimer interacts with three TNFSF10B mononers. Post-translationally, tyrosine phosphorylated by PKDCC/VLK. Widespread; most predominant in spleen, lung and prostate.

It is found in the cell membrane. Its subcellular location is the secreted. In terms of biological role, cytokine that binds to TNFRSF10A/TRAILR1, TNFRSF10B/TRAILR2, TNFRSF10C/TRAILR3, TNFRSF10D/TRAILR4 and possibly also to TNFRSF11B/OPG. Induces apoptosis. Its activity may be modulated by binding to the decoy receptors TNFRSF10C/TRAILR3, TNFRSF10D/TRAILR4 and TNFRSF11B/OPG that cannot induce apoptosis. The chain is Tumor necrosis factor ligand superfamily member 10 (TNFSF10) from Homo sapiens (Human).